We begin with the raw amino-acid sequence, 374 residues long: Wnt inhibitory factor 1 (374 aa).

The N-terminal stretch at 1–28 (MSLTGYFAAPLCSIFLFILAHADAGQQE) is a signal peptide. The WIF domain occupies 33 to 172 (MWIDAHQARV…PQNAIFFKTC (140 aa)). A glycan (N-linked (GlcNAc...) asparagine) is linked at Asn-83. 7 disulfide bridges follow: Cys-135/Cys-172, Cys-177/Cys-187, Cys-181/Cys-193, Cys-195/Cys-204, Cys-209/Cys-219, Cys-213/Cys-225, and Cys-227/Cys-236. 5 consecutive EGF-like domains span residues 173 to 205 (QQAK…PHCE), 208 to 237 (LCMP…INCD), 237 to 269 (DKVN…EQCE), 270 to 301 (TSKC…DLCS), and 302 to 333 (KPVC…RYCN). An N-linked (GlcNAc...) asparagine glycan is attached at Asn-240. 9 disulfide bridges follow: Cys-241–Cys-251, Cys-245–Cys-257, Cys-259–Cys-268, Cys-273–Cys-283, Cys-277–Cys-289, Cys-291–Cys-300, Cys-305–Cys-315, Cys-309–Cys-321, and Cys-323–Cys-332. Residues 343–374 (ALRPTGSRNRQHTPSPKRTEDRQALPESNYIW) are disordered. Residues 348-358 (GSRNRQHTPSP) show a composition bias toward polar residues.

As to expression, during somatogenesis, expressed predominantly in unsegmented paraxial presomitic mesoderm and, to a much lesser extent, in newly segmented somites.

It is found in the secreted. Functionally, binds to WNT proteins and inhibits their activities. May be involved in mesoderm segmentation. The protein is Wnt inhibitory factor 1 (wif1) of Xenopus laevis (African clawed frog).